A 330-amino-acid polypeptide reads, in one-letter code: Dof zinc finger protein DOF2.4 (330 aa).

A compositionally biased stretch (polar residues) spans 14-25; the sequence is NWQQAPPSNYNH. The segment at 14-70 is disordered; the sequence is NWQQAPPSNYNHDGTGASANGGHVLRPQLQPQQQPQQQPHPNGSGGGGGGGGGSIRA. Residues 40–55 are compositionally biased toward low complexity; that stretch reads PQLQPQQQPQQQPHPN. A compositionally biased stretch (gly residues) spans 56–68; the sequence is GSGGGGGGGGGSI. The segment at 89–143 adopts a Dof-type zinc-finger fold; that stretch reads LKCPRCESTNTKFCYFNNYSLTQPRHFCKTCRRYWTRGGALRNVPVGGGCRRNRR. Zn(2+)-binding residues include Cys-91, Cys-94, Cys-116, and Cys-119. Disordered regions lie at residues 133–165 and 255–276; these read PVGG…SFSS and QQSS…SANG. Residues 146–165 are compositionally biased toward low complexity; the sequence is SNSNNNNNSTATSNNTSFSS. Residues 265-276 show a composition bias toward polar residues; it reads EDSSNPNPSANG.

In terms of tissue distribution, specific to the vascular tissues. The PEAR proteins (e.g. DOF2.4, DOF5.1, DOF3.2, DOF1.1, DOF5.6 and DOF5.3) form a short-range concentration gradient that peaks at protophloem sieve elements (PSE).

The protein resides in the nucleus. Its subcellular location is the symplast. Functionally, transcription factor that binds specifically to a 5'-AA[AG]G-3' consensus core sequence. Probably involved in early processes for vascular development. The PEAR proteins (e.g. DOF2.4, DOF5.1, DOF3.2, DOF1.1, DOF5.6 and DOF5.3) activate gene expression that promotes radial growth of protophloem sieve elements. Triggers the transcription of HD-ZIP III genes, especially in the central domain of vascular tissue. This chain is Dof zinc finger protein DOF2.4, found in Arabidopsis thaliana (Mouse-ear cress).